The sequence spans 389 residues: Krueppel-like factor 17 (389 aa).

2 disordered regions span residues Met1–His48 and Leu239–Glu279. Residues Ala26–Met38 are compositionally biased toward polar residues. Residues Lys264–Ser278 show a composition bias toward basic and acidic residues. 3 consecutive C2H2-type zinc fingers follow at residues Tyr283–His307, Tyr313–His337, and Tyr343–His365. Residues Asp356–Pro389 form a disordered region. The span at Pro372–Gln381 shows a compositional bias: polar residues.

It belongs to the Sp1 C2H2-type zinc-finger protein family.

It is found in the nucleus. In terms of biological role, transcription repressor that binds to the promoter of target genes and prevents their expression. Acts as a negative regulator of epithelial-mesenchymal transition and metastasis in breast cancer. Specifically binds the 5'-CACCC-3' sequence in the promoter of ID1, a key metastasis regulator in breast cancer, and repress its expression. May be a germ cell-specific transcription factor that plays important roles in spermatid differentiation and oocyte development. The protein is Krueppel-like factor 17 (KLF17) of Homo sapiens (Human).